The chain runs to 307 residues: Acyl transferase (307 aa).

Catalysis depends on charge relay system residues Ser-116, Asp-213, and His-243.

This sequence belongs to the LuxD family.

The protein operates within lipid metabolism; fatty acid reduction for biolumincescence. Its function is as follows. Acyl transferase is part of the fatty acid reductase system required for aldehyde biosynthesis; it produces fatty acids for the luminescent reaction. This chain is Acyl transferase, found in Aliivibrio fischeri (Vibrio fischeri).